A 363-amino-acid polypeptide reads, in one-letter code: Dual-specificity RNA methyltransferase RlmN (363 aa).

Residue E102 is the Proton acceptor of the active site. Residues 108–349 form the Radical SAM core domain; it reads EKKRATLCVS…KNRGQDIGAA (242 aa). A disulfide bond links C115 and C350. C122, C126, and C129 together coordinate [4Fe-4S] cluster. Residues 174–175, S206, 228–230, and N307 each bind S-adenosyl-L-methionine; these read GE and SLH. The S-methylcysteine intermediate role is filled by C350.

Belongs to the radical SAM superfamily. RlmN family. [4Fe-4S] cluster serves as cofactor.

The protein resides in the cytoplasm. It carries out the reaction adenosine(2503) in 23S rRNA + 2 reduced [2Fe-2S]-[ferredoxin] + 2 S-adenosyl-L-methionine = 2-methyladenosine(2503) in 23S rRNA + 5'-deoxyadenosine + L-methionine + 2 oxidized [2Fe-2S]-[ferredoxin] + S-adenosyl-L-homocysteine. The catalysed reaction is adenosine(37) in tRNA + 2 reduced [2Fe-2S]-[ferredoxin] + 2 S-adenosyl-L-methionine = 2-methyladenosine(37) in tRNA + 5'-deoxyadenosine + L-methionine + 2 oxidized [2Fe-2S]-[ferredoxin] + S-adenosyl-L-homocysteine. In terms of biological role, specifically methylates position 2 of adenine 2503 in 23S rRNA and position 2 of adenine 37 in tRNAs. m2A2503 modification seems to play a crucial role in the proofreading step occurring at the peptidyl transferase center and thus would serve to optimize ribosomal fidelity. This chain is Dual-specificity RNA methyltransferase RlmN, found in Buchnera aphidicola subsp. Schizaphis graminum (strain Sg).